Here is a 437-residue protein sequence, read N- to C-terminus: Eukaryotic peptide chain release factor subunit 1 (437 aa).

Residues 61–64 carry the NIKS motif; plays an important role in translational termination motif; sequence NIKS.

Belongs to the eukaryotic release factor 1 family. In terms of assembly, component of the eRF1-eRF3-GTP ternary complex, composed of ETF1/ERF1 and eRF3 (GSPT1/ERF3A or GSPT2/ERF3B) and GTP.

Its subcellular location is the cytoplasm. Component of the eRF1-eRF3-GTP ternary complex, a ternary complex that mediates translation termination in response to the termination codons. The eRF1-eRF3-GTP complex binds to a stop codon in the ribosomal A-site. ETF1/ERF1 is responsible for stop codon recognition and inducing hydrolysis of peptidyl-tRNA. Following GTP hydrolysis, eRF3 (GSPT1/ERF3A or GSPT2/ERF3B) dissociates, permitting ETF1/eRF1 to accommodate fully in the A-site, followed by hydrolysis of peptidyl-tRNA. The sequence is that of Eukaryotic peptide chain release factor subunit 1 (etf1) from Xenopus laevis (African clawed frog).